Here is a 396-residue protein sequence, read N- to C-terminus: Putative cystathionine beta-lyase (396 aa).

K210 carries the post-translational modification N6-(pyridoxal phosphate)lysine.

Belongs to the trans-sulfuration enzymes family. Pyridoxal 5'-phosphate serves as cofactor.

The enzyme catalyses L,L-cystathionine + H2O = L-homocysteine + pyruvate + NH4(+). It catalyses the reaction an S-substituted L-cysteine + H2O = a thiol + pyruvate + NH4(+). The protein operates within amino-acid biosynthesis; L-methionine biosynthesis via de novo pathway; L-homocysteine from L-cystathionine: step 1/1. Catalyzes the cleavage of cystathionine to homocysteine, pyruvate and ammonia during methionine biosynthesis. The protein is Putative cystathionine beta-lyase (metC) of Rhizobium johnstonii (strain DSM 114642 / LMG 32736 / 3841) (Rhizobium leguminosarum bv. viciae).